Reading from the N-terminus, the 72-residue chain is uncharacterized protein (72 aa).

This is an uncharacterized protein from Rickettsia conorii (strain ATCC VR-613 / Malish 7).